The primary structure comprises 388 residues: Phosphopentomutase (388 aa).

Mn(2+) contacts are provided by aspartate 11, aspartate 283, histidine 288, aspartate 324, histidine 325, and histidine 336.

It belongs to the phosphopentomutase family. Mn(2+) serves as cofactor.

Its subcellular location is the cytoplasm. The enzyme catalyses 2-deoxy-alpha-D-ribose 1-phosphate = 2-deoxy-D-ribose 5-phosphate. It catalyses the reaction alpha-D-ribose 1-phosphate = D-ribose 5-phosphate. The protein operates within carbohydrate degradation; 2-deoxy-D-ribose 1-phosphate degradation; D-glyceraldehyde 3-phosphate and acetaldehyde from 2-deoxy-alpha-D-ribose 1-phosphate: step 1/2. Isomerase that catalyzes the conversion of deoxy-ribose 1-phosphate (dRib-1-P) and ribose 1-phosphate (Rib-1-P) to deoxy-ribose 5-phosphate (dRib-5-P) and ribose 5-phosphate (Rib-5-P), respectively. The sequence is that of Phosphopentomutase from Anaeromyxobacter dehalogenans (strain 2CP-1 / ATCC BAA-258).